A 222-amino-acid polypeptide reads, in one-letter code: Charged multivesicular body protein 4b (222 aa).

Disordered stretches follow at residues 1–21 (MSLI…PSPQ) and 177–222 (NLLE…WATA). Residues 21–182 (QEAIQKLRDT…ELDKNLLEVQ (162 aa)) are a coiled coil.

It belongs to the SNF7 family. In terms of assembly, probable core component of the endosomal sorting required for transport complex III (ESCRT-III). ESCRT-III components are thought to multimerize to form a flat lattice on the perimeter membrane of the endosome.

The protein localises to the cytoplasm. It is found in the cytosol. It localises to the late endosome membrane. The protein resides in the midbody. Its function is as follows. Probable core component of the endosomal sorting required for transport complex III (ESCRT-III) which is involved in multivesicular bodies (MVBs) formation and sorting of endosomal cargo proteins into MVBs. MVBs contain intraluminal vesicles (ILVs) that are generated by invagination and scission from the limiting membrane of the endosome and mostly are delivered to lysosomes enabling degradation of membrane proteins, such as stimulated growth factor receptors, lysosomal enzymes and lipids. This Xenopus laevis (African clawed frog) protein is Charged multivesicular body protein 4b (chmp4b).